The sequence spans 337 residues: Aspartate carbamoyltransferase catalytic subunit (337 aa).

Carbamoyl phosphate contacts are provided by Arg57 and Thr58. Lys86 is an L-aspartate binding site. Residues Arg107, His135, and Gln138 each contribute to the carbamoyl phosphate site. L-aspartate is bound by residues Arg172 and Arg234. Positions 274 and 275 each coordinate carbamoyl phosphate.

Belongs to the aspartate/ornithine carbamoyltransferase superfamily. ATCase family. In terms of assembly, heterododecamer (2C3:3R2) of six catalytic PyrB chains organized as two trimers (C3), and six regulatory PyrI chains organized as three dimers (R2).

It catalyses the reaction carbamoyl phosphate + L-aspartate = N-carbamoyl-L-aspartate + phosphate + H(+). It participates in pyrimidine metabolism; UMP biosynthesis via de novo pathway; (S)-dihydroorotate from bicarbonate: step 2/3. Functionally, catalyzes the condensation of carbamoyl phosphate and aspartate to form carbamoyl aspartate and inorganic phosphate, the committed step in the de novo pyrimidine nucleotide biosynthesis pathway. The chain is Aspartate carbamoyltransferase catalytic subunit from Saccharophagus degradans (strain 2-40 / ATCC 43961 / DSM 17024).